We begin with the raw amino-acid sequence, 751 residues long: Photosystem I P700 chlorophyll a apoprotein A1 (751 aa).

A run of 8 helical transmembrane segments spans residues 73-96 (IFSA…FHGA), 159-182 (LYST…FHYH), 198-222 (MNHH…HVSL), 294-312 (TAHH…GHMY), 349-372 (WHAQ…HHMY), 388-414 (LSLF…IFMV), 436-458 (AIIS…LYIH), and 533-551 (FLVH…LILL). 2 residues coordinate [4Fe-4S] cluster: C575 and C584. 2 helical membrane-spanning segments follow: residues 591 to 612 (HVFL…HFSW) and 665 to 687 (LSAY…MFLF). H676 serves as a coordination point for chlorophyll a'. Chlorophyll a is bound by residues M684 and Y692. Position 693 (W693) interacts with phylloquinone. A helical membrane pass occupies residues 725–745 (AVGVAHYLLGGIATTWAFFLA).

The protein belongs to the PsaA/PsaB family. The PsaA/B heterodimer binds the P700 chlorophyll special pair and subsequent electron acceptors. PSI consists of a core antenna complex that captures photons, and an electron transfer chain that converts photonic excitation into a charge separation. The eukaryotic PSI reaction center is composed of at least 11 subunits. Requires P700 is a chlorophyll a/chlorophyll a' dimer, A0 is one or more chlorophyll a, A1 is one or both phylloquinones and FX is a shared 4Fe-4S iron-sulfur center. as cofactor.

It is found in the plastid. Its subcellular location is the chloroplast thylakoid membrane. The enzyme catalyses reduced [plastocyanin] + hnu + oxidized [2Fe-2S]-[ferredoxin] = oxidized [plastocyanin] + reduced [2Fe-2S]-[ferredoxin]. In terms of biological role, psaA and PsaB bind P700, the primary electron donor of photosystem I (PSI), as well as the electron acceptors A0, A1 and FX. PSI is a plastocyanin/cytochrome c6-ferredoxin oxidoreductase, converting photonic excitation into a charge separation, which transfers an electron from the donor P700 chlorophyll pair to the spectroscopically characterized acceptors A0, A1, FX, FA and FB in turn. Oxidized P700 is reduced on the lumenal side of the thylakoid membrane by plastocyanin or cytochrome c6. The sequence is that of Photosystem I P700 chlorophyll a apoprotein A1 from Nephroselmis olivacea (Green alga).